The sequence spans 601 residues: Elongation factor 4 (601 aa).

One can recognise a tr-type G domain in the interval 7–189 (RNIRNFSIIA…AIVHRIPPPK (183 aa)). Residues 19–24 (DHGKST) and 136–139 (NKID) contribute to the GTP site.

It belongs to the TRAFAC class translation factor GTPase superfamily. Classic translation factor GTPase family. LepA subfamily.

The protein resides in the cell inner membrane. The catalysed reaction is GTP + H2O = GDP + phosphate + H(+). Its function is as follows. Required for accurate and efficient protein synthesis under certain stress conditions. May act as a fidelity factor of the translation reaction, by catalyzing a one-codon backward translocation of tRNAs on improperly translocated ribosomes. Back-translocation proceeds from a post-translocation (POST) complex to a pre-translocation (PRE) complex, thus giving elongation factor G a second chance to translocate the tRNAs correctly. Binds to ribosomes in a GTP-dependent manner. In Xanthomonas campestris pv. campestris (strain ATCC 33913 / DSM 3586 / NCPPB 528 / LMG 568 / P 25), this protein is Elongation factor 4.